An 89-amino-acid polypeptide reads, in one-letter code: UPF0223 protein BCB4264_A4064 (89 aa).

It belongs to the UPF0223 family.

The sequence is that of UPF0223 protein BCB4264_A4064 from Bacillus cereus (strain B4264).